A 70-amino-acid polypeptide reads, in one-letter code: Cecropin-P1 (70 aa).

An N-terminal signal peptide occupies residues 1 to 13 (MFLIYLFVQTAES). A propeptide spans 45 to 70 (RRRFVAEQDAIHSRVSREVPTLSDSV) (removed in mature form).

In terms of tissue distribution, expressed in the body wall, intestine, uterus and ovary.

It localises to the secreted. In terms of biological role, has antibacterial activity against several Gram-positive and Gram-negative bacteria. Is weakly active against yeasts. Acts by a nonpore mechanism. The protein is Cecropin-P1 (ASCEC-1) of Ascaris suum (Pig roundworm).